The sequence spans 360 residues: Membrane-bound lytic murein transglycosylase C (360 aa).

Positions 1-16 (MKKLLALAVIAPLLIS) are cleaved as a signal peptide. Cys17 carries the N-palmitoyl cysteine lipid modification. Cys17 is lipidated: S-diacylglycerol cysteine.

It belongs to the transglycosylase Slt family.

It localises to the cell outer membrane. It carries out the reaction Exolytic cleavage of the (1-&gt;4)-beta-glycosidic linkage between N-acetylmuramic acid (MurNAc) and N-acetylglucosamine (GlcNAc) residues in peptidoglycan, from either the reducing or the non-reducing ends of the peptidoglycan chains, with concomitant formation of a 1,6-anhydrobond in the MurNAc residue.. Its function is as follows. Murein-degrading enzyme. May play a role in recycling of muropeptides during cell elongation and/or cell division. This chain is Membrane-bound lytic murein transglycosylase C, found in Salmonella typhi.